Here is a 274-residue protein sequence, read N- to C-terminus: 2,3,4,5-tetrahydropyridine-2,6-dicarboxylate N-succinyltransferase (274 aa).

R104 and D141 together coordinate substrate.

It belongs to the transferase hexapeptide repeat family. Homotrimer.

It is found in the cytoplasm. It carries out the reaction (S)-2,3,4,5-tetrahydrodipicolinate + succinyl-CoA + H2O = (S)-2-succinylamino-6-oxoheptanedioate + CoA. It participates in amino-acid biosynthesis; L-lysine biosynthesis via DAP pathway; LL-2,6-diaminopimelate from (S)-tetrahydrodipicolinate (succinylase route): step 1/3. This chain is 2,3,4,5-tetrahydropyridine-2,6-dicarboxylate N-succinyltransferase, found in Buchnera aphidicola subsp. Acyrthosiphon pisum (strain APS) (Acyrthosiphon pisum symbiotic bacterium).